The following is a 379-amino-acid chain: uncharacterized protein (379 aa).

ATP is bound at residue 29 to 36; sequence GPLNSGKT.

It belongs to the archaeal ATPase family.

This is an uncharacterized protein from Methanocaldococcus jannaschii (strain ATCC 43067 / DSM 2661 / JAL-1 / JCM 10045 / NBRC 100440) (Methanococcus jannaschii).